Here is a 589-residue protein sequence, read N- to C-terminus: Kelch-like protein 25 (589 aa).

Residues 46–114 enclose the BTB domain; the sequence is TDVTLWAGDR…AYSSRIAINE (69 aa). Residues 149 to 250 enclose the BACK domain; sequence CLGMMLLSDA…LPSDCLQEAV (102 aa). Kelch repeat units lie at residues 296 to 340, 341 to 388, 389 to 444, 446 to 492, 494 to 538, and 539 to 585; these read TLLI…AIGC, KVYV…ELEN, CLYV…SAKL, LFVF…VLGS, IFIM…ASGN, and KLYV…STWK.

In terms of assembly, component of the BCR(KLHL25) E3 ubiquitin ligase complex, at least composed of CUL3, KLHL25 and RBX1.

Its pathway is protein modification; protein ubiquitination. Substrate-specific adapter of a BCR (BTB-CUL3-RBX1) E3 ubiquitin ligase complex involved in various processes, such as translation homeostasis and lipid synthesis. The BCR(KLHL25) ubiquitin ligase complex acts by mediating ubiquitination of hypophosphorylated EIF4EBP1 (4E-BP1): ubiquitination and subsequent degradation of hypophosphorylated EIF4EBP1 (4E-BP1) probably serves as a homeostatic mechanism to maintain translation and prevent eIF4E inhibition when eIF4E levels are low. The BCR(KLHL25) complex does not target EIF4EBP1 (4E-BP1) when it is hyperphosphorylated or associated with eIF4E. The BCR(KLHL25) complex also acts as a regulator of lipid synthesis by mediating ubiquitination and degradation of ACLY, thereby inhibiting lipid synthesis. BCR(KLHL25)-mediated degradation of ACLY promotes fatty acid oxidation and is required for differentiation of inducible regulatory T (iTreg) cells. The protein is Kelch-like protein 25 of Homo sapiens (Human).